A 189-amino-acid polypeptide reads, in one-letter code: Holliday junction branch migration complex subunit RuvA (189 aa).

A domain I region spans residues 1-63 (MIYAMYGVLE…DDEISLYGFS (63 aa)). The domain II stretch occupies residues 64-135 (DVLKLKLFEK…ELKDSMKEFD (72 aa)). Residues 135-139 (DVTLT) form a flexible linker region. Residues 140–189 (EKDKKILEAIEALVTLGFSRNQSKKAVTQILKKDDSLDDIIKKALKFLSR) are domain III.

Belongs to the RuvA family. As to quaternary structure, homotetramer. Forms an RuvA(8)-RuvB(12)-Holliday junction (HJ) complex. HJ DNA is sandwiched between 2 RuvA tetramers; dsDNA enters through RuvA and exits via RuvB. An RuvB hexamer assembles on each DNA strand where it exits the tetramer. Each RuvB hexamer is contacted by two RuvA subunits (via domain III) on 2 adjacent RuvB subunits; this complex drives branch migration. In the full resolvosome a probable DNA-RuvA(4)-RuvB(12)-RuvC(2) complex forms which resolves the HJ.

It is found in the cytoplasm. In terms of biological role, the RuvA-RuvB-RuvC complex processes Holliday junction (HJ) DNA during genetic recombination and DNA repair, while the RuvA-RuvB complex plays an important role in the rescue of blocked DNA replication forks via replication fork reversal (RFR). RuvA specifically binds to HJ cruciform DNA, conferring on it an open structure. The RuvB hexamer acts as an ATP-dependent pump, pulling dsDNA into and through the RuvAB complex. HJ branch migration allows RuvC to scan DNA until it finds its consensus sequence, where it cleaves and resolves the cruciform DNA. This Thermosipho melanesiensis (strain DSM 12029 / CIP 104789 / BI429) protein is Holliday junction branch migration complex subunit RuvA.